We begin with the raw amino-acid sequence, 167 residues long: V-type proton ATPase subunit c' (167 aa).

Over 1 to 13 the chain is Lumenal; the sequence is MAEIMADSELAPK. Residues 14–34 traverse the membrane as a helical segment; that stretch reads FAPFIGMAGIAAAMIFGSAGA. Residues 35–59 are Cytoplasmic-facing; it reads AYGTAKSGIGIAGVGTFRPDLIMKC. A helical transmembrane segment spans residues 60–80; sequence LIPVVMSGIIAVYALVVAVLI. Topologically, residues 81–101 are lumenal; the sequence is AQDLGPPGSGQHYSLFNGFMH. A helical transmembrane segment spans residues 102–122; that stretch reads LACGLSVGLTGLAAGYCIGIV. The Cytoplasmic segment spans residues 123-140; that stretch reads GDKGVRSFMLQSRIFVGM. A helical transmembrane segment spans residues 141–161; it reads VLILIFGEVLGLYGLIVALIL. Residues 162-167 lie on the Lumenal side of the membrane; it reads NTKSKG.

The protein belongs to the V-ATPase proteolipid subunit family. V-ATPase is a heteromultimeric enzyme composed of a peripheral catalytic V1 complex (components A to H) attached to an integral membrane V0 proton pore complex (components: a, c, c', c'', d, e, f and VOA1). The decameric c-ring forms the proton-conducting pore, and is composed of eight proteolipid subunits c, one subunit c' and one subunit c''.

Its subcellular location is the vacuole membrane. Proton-conducting pore forming subunit of the V0 complex of vacuolar(H+)-ATPase (V-ATPase), a multisubunit enzyme composed of a peripheral complex (V1) that hydrolyzes ATP and a membrane integral complex (V0) that translocates protons. V-ATPase is responsible for acidifying and maintaining the pH of intracellular compartments. The chain is V-type proton ATPase subunit c' (vma-11) from Neurospora crassa (strain ATCC 24698 / 74-OR23-1A / CBS 708.71 / DSM 1257 / FGSC 987).